Here is a 665-residue protein sequence, read N- to C-terminus: UvrABC system protein B (665 aa).

Residues 25 to 176 (NSIEKGNRFQ…NQRQLLRDLV (152 aa)) form the Helicase ATP-binding domain. Residue 38–45 (GATGTGKT) participates in ATP binding. Residues 91 to 114 (YYDYYQPEAYIPVSDTYIEKSASI) carry the Beta-hairpin motif. Residues 429-595 (QVDDLLGEIK…PIVTRSSNAI (167 aa)) form the Helicase C-terminal domain. Residues 626–661 (PELIGQLEEQMKEAAKKLEFEEAAKYRDRIQHLRDK) form the UVR domain.

The protein belongs to the UvrB family. As to quaternary structure, forms a heterotetramer with UvrA during the search for lesions. Interacts with UvrC in an incision complex.

Its subcellular location is the cytoplasm. In terms of biological role, the UvrABC repair system catalyzes the recognition and processing of DNA lesions. A damage recognition complex composed of 2 UvrA and 2 UvrB subunits scans DNA for abnormalities. Upon binding of the UvrA(2)B(2) complex to a putative damaged site, the DNA wraps around one UvrB monomer. DNA wrap is dependent on ATP binding by UvrB and probably causes local melting of the DNA helix, facilitating insertion of UvrB beta-hairpin between the DNA strands. Then UvrB probes one DNA strand for the presence of a lesion. If a lesion is found the UvrA subunits dissociate and the UvrB-DNA preincision complex is formed. This complex is subsequently bound by UvrC and the second UvrB is released. If no lesion is found, the DNA wraps around the other UvrB subunit that will check the other stand for damage. The chain is UvrABC system protein B from Gloeothece citriformis (strain PCC 7424) (Cyanothece sp. (strain PCC 7424)).